The sequence spans 490 residues: ATP synthase subunit beta, chloroplastic (490 aa).

Residue 170–177 (GGAGVGKT) coordinates ATP.

It belongs to the ATPase alpha/beta chains family. In terms of assembly, F-type ATPases have 2 components, CF(1) - the catalytic core - and CF(0) - the membrane proton channel. CF(1) has five subunits: alpha(3), beta(3), gamma(1), delta(1), epsilon(1). CF(0) has four main subunits: a(1), b(1), b'(1) and c(9-12).

It is found in the plastid. Its subcellular location is the chloroplast thylakoid membrane. It catalyses the reaction ATP + H2O + 4 H(+)(in) = ADP + phosphate + 5 H(+)(out). In terms of biological role, produces ATP from ADP in the presence of a proton gradient across the membrane. The catalytic sites are hosted primarily by the beta subunits. The chain is ATP synthase subunit beta, chloroplastic from Convolvulus arvensis (Field bindweed).